We begin with the raw amino-acid sequence, 194 residues long: NADH-quinone oxidoreductase subunit B 1 (194 aa).

Positions 73, 74, 138, and 168 each coordinate [4Fe-4S] cluster.

The protein belongs to the complex I 20 kDa subunit family. NDH-1 is composed of 14 different subunits. Subunits NuoB, C, D, E, F, and G constitute the peripheral sector of the complex. The cofactor is [4Fe-4S] cluster.

It is found in the cell inner membrane. It catalyses the reaction a quinone + NADH + 5 H(+)(in) = a quinol + NAD(+) + 4 H(+)(out). Functionally, NDH-1 shuttles electrons from NADH, via FMN and iron-sulfur (Fe-S) centers, to quinones in the respiratory chain. The immediate electron acceptor for the enzyme in this species is believed to be ubiquinone. Couples the redox reaction to proton translocation (for every two electrons transferred, four hydrogen ions are translocated across the cytoplasmic membrane), and thus conserves the redox energy in a proton gradient. This Rhizobium etli (strain CIAT 652) protein is NADH-quinone oxidoreductase subunit B 1.